Here is a 259-residue protein sequence, read N- to C-terminus: 3-deoxy-manno-octulosonate cytidylyltransferase (259 aa).

Belongs to the KdsB family.

Its subcellular location is the cytoplasm. The catalysed reaction is 3-deoxy-alpha-D-manno-oct-2-ulosonate + CTP = CMP-3-deoxy-beta-D-manno-octulosonate + diphosphate. It functions in the pathway nucleotide-sugar biosynthesis; CMP-3-deoxy-D-manno-octulosonate biosynthesis; CMP-3-deoxy-D-manno-octulosonate from 3-deoxy-D-manno-octulosonate and CTP: step 1/1. The protein operates within bacterial outer membrane biogenesis; lipopolysaccharide biosynthesis. In terms of biological role, activates KDO (a required 8-carbon sugar) for incorporation into bacterial lipopolysaccharide in Gram-negative bacteria. The sequence is that of 3-deoxy-manno-octulosonate cytidylyltransferase from Xanthomonas axonopodis pv. citri (strain 306).